We begin with the raw amino-acid sequence, 361 residues long: RLA class I histocompatibility antigen, alpha chain 19-1 (361 aa).

A signal peptide spans 1 to 24 (MGSIPPRTLLLLLAGALTLKDTQA). Positions 25–114 (GSHSMRYFYT…ALRYYNQSAA (90 aa)) are alpha-1. Residues 25–308 (GSHSMRYFYT…EPPAQPTALI (284 aa)) are Extracellular-facing. A glycan (N-linked (GlcNAc...) asparagine) is linked at asparagine 110. Residues 115–206 (GSHTFQTMFG…EMGKETLQRA (92 aa)) form an alpha-2 region. Disulfide bonds link cysteine 125-cysteine 188 and cysteine 227-cysteine 283. The interval 207–298 (DPPKAHVTHH…GLPEPLTLTW (92 aa)) is alpha-3. Positions 209–297 (PKAHVTHHPA…EGLPEPLTLT (89 aa)) constitute an Ig-like C1-type domain. Residues 299–308 (EPPAQPTALI) form a connecting peptide region. The helical transmembrane segment at 309-329 (VGIVAGVLGVLLILGAVVAVV) threads the bilayer. Over 330–361 (RRKKHSSDGKGGRYTPAAGGHRDQGSDDSLMP) the chain is Cytoplasmic. The disordered stretch occupies residues 335-361 (SSDGKGGRYTPAAGGHRDQGSDDSLMP). A phosphoserine mark is found at serine 355 and serine 358.

Belongs to the MHC class I family. In terms of assembly, heterodimer of an alpha chain and a beta chain (beta-2-microglobulin).

The protein resides in the membrane. Its function is as follows. Involved in the presentation of foreign antigens to the immune system. The polypeptide is RLA class I histocompatibility antigen, alpha chain 19-1 (Oryctolagus cuniculus (Rabbit)).